A 281-amino-acid polypeptide reads, in one-letter code: Diaminopimelate epimerase (281 aa).

3 residues coordinate substrate: Asn-13, Gln-46, and Asn-66. Catalysis depends on Cys-75, which acts as the Proton donor. Substrate is bound by residues 76–77 (GN), Asn-160, Asn-193, and 211–212 (ER). Cys-220 (proton acceptor) is an active-site residue. 221–222 (GT) lines the substrate pocket.

It belongs to the diaminopimelate epimerase family. As to quaternary structure, homodimer.

The protein localises to the cytoplasm. The enzyme catalyses (2S,6S)-2,6-diaminopimelate = meso-2,6-diaminopimelate. The protein operates within amino-acid biosynthesis; L-lysine biosynthesis via DAP pathway; DL-2,6-diaminopimelate from LL-2,6-diaminopimelate: step 1/1. Its function is as follows. Catalyzes the stereoinversion of LL-2,6-diaminopimelate (L,L-DAP) to meso-diaminopimelate (meso-DAP), a precursor of L-lysine and an essential component of the bacterial peptidoglycan. The protein is Diaminopimelate epimerase of Acinetobacter baumannii (strain ATCC 17978 / DSM 105126 / CIP 53.77 / LMG 1025 / NCDC KC755 / 5377).